The primary structure comprises 369 residues: DNA replication and repair protein RecF (369 aa).

Position 30–37 (glycine 30–threonine 37) interacts with ATP.

It belongs to the RecF family.

The protein resides in the cytoplasm. In terms of biological role, the RecF protein is involved in DNA metabolism; it is required for DNA replication and normal SOS inducibility. RecF binds preferentially to single-stranded, linear DNA. It also seems to bind ATP. This is DNA replication and repair protein RecF from Pseudomonas aeruginosa (strain UCBPP-PA14).